We begin with the raw amino-acid sequence, 159 residues long: MAPKGSQRVVNKVVAENRKARFNYEIIDTYEAGLVLKGTEVKSLREGKANIAESYASDEDGEIWLINSYLPEYLQANRFNHEPRRRRKLLLSGREIHRLRSAVNREGMTLVPLKIYFNDRGRAKMELALAKGKKLHDKRESEKERDWNRQKSRLLKDNG.

Residues 131 to 159 (KGKKLHDKRESEKERDWNRQKSRLLKDNG) form a disordered region. Positions 137–159 (DKRESEKERDWNRQKSRLLKDNG) are enriched in basic and acidic residues.

This sequence belongs to the SmpB family.

The protein resides in the cytoplasm. In terms of biological role, required for rescue of stalled ribosomes mediated by trans-translation. Binds to transfer-messenger RNA (tmRNA), required for stable association of tmRNA with ribosomes. tmRNA and SmpB together mimic tRNA shape, replacing the anticodon stem-loop with SmpB. tmRNA is encoded by the ssrA gene; the 2 termini fold to resemble tRNA(Ala) and it encodes a 'tag peptide', a short internal open reading frame. During trans-translation Ala-aminoacylated tmRNA acts like a tRNA, entering the A-site of stalled ribosomes, displacing the stalled mRNA. The ribosome then switches to translate the ORF on the tmRNA; the nascent peptide is terminated with the 'tag peptide' encoded by the tmRNA and targeted for degradation. The ribosome is freed to recommence translation, which seems to be the essential function of trans-translation. The protein is SsrA-binding protein of Rhizobium etli (strain CIAT 652).